A 271-amino-acid polypeptide reads, in one-letter code: Elongation factor Ts (271 aa).

The tract at residues Thr76–Val79 is involved in Mg(2+) ion dislocation from EF-Tu.

Belongs to the EF-Ts family.

It is found in the cytoplasm. Its function is as follows. Associates with the EF-Tu.GDP complex and induces the exchange of GDP to GTP. It remains bound to the aminoacyl-tRNA.EF-Tu.GTP complex up to the GTP hydrolysis stage on the ribosome. The chain is Elongation factor Ts from Mycobacterium bovis (strain BCG / Pasteur 1173P2).